A 377-amino-acid polypeptide reads, in one-letter code: Succinyl-diaminopimelate desuccinylase (377 aa).

His67 is a Zn(2+) binding site. Residue Asp69 is part of the active site. A Zn(2+)-binding site is contributed by Asp100. Glu134 functions as the Proton acceptor in the catalytic mechanism. Positions 135, 163, and 349 each coordinate Zn(2+).

It belongs to the peptidase M20A family. DapE subfamily. Homodimer. Zn(2+) serves as cofactor. It depends on Co(2+) as a cofactor.

The catalysed reaction is N-succinyl-(2S,6S)-2,6-diaminopimelate + H2O = (2S,6S)-2,6-diaminopimelate + succinate. Its pathway is amino-acid biosynthesis; L-lysine biosynthesis via DAP pathway; LL-2,6-diaminopimelate from (S)-tetrahydrodipicolinate (succinylase route): step 3/3. Catalyzes the hydrolysis of N-succinyl-L,L-diaminopimelic acid (SDAP), forming succinate and LL-2,6-diaminopimelate (DAP), an intermediate involved in the bacterial biosynthesis of lysine and meso-diaminopimelic acid, an essential component of bacterial cell walls. The polypeptide is Succinyl-diaminopimelate desuccinylase (Haemophilus influenzae (strain PittGG)).